A 1380-amino-acid chain; its full sequence is DNA-directed RNA polymerase subunit beta (1380 aa).

The protein belongs to the RNA polymerase beta chain family. In terms of assembly, the RNAP catalytic core consists of 2 alpha, 1 beta, 1 beta' and 1 omega subunit. When a sigma factor is associated with the core the holoenzyme is formed, which can initiate transcription.

It catalyses the reaction RNA(n) + a ribonucleoside 5'-triphosphate = RNA(n+1) + diphosphate. Its function is as follows. DNA-dependent RNA polymerase catalyzes the transcription of DNA into RNA using the four ribonucleoside triphosphates as substrates. In Rhizobium rhizogenes (strain K84 / ATCC BAA-868) (Agrobacterium radiobacter), this protein is DNA-directed RNA polymerase subunit beta.